A 148-amino-acid polypeptide reads, in one-letter code: MPVLKQLGPAQPKKRPDRGALSISAPLGDFRHTLHVGRGGDAFGDTSFLSRHGGGPPPEPRAPPAGAPRSPPPPAVPQSAAPSPADPLLSFHLDLGPSMLDAVLGVMDAARPEAAAAKPDAEPRPGTQPPQARCRPNADLELNDVIGL.

Disordered regions lie at residues 1–89 (MPVL…DPLL) and 111–148 (RPEA…VIGL). One can recognise a CRIB domain in the interval 23-37 (ISAPLGDFRHTLHVG). Arg-38 carries the omega-N-methylarginine modification. Residues 55–76 (GPPPEPRAPPAGAPRSPPPPAV) are compositionally biased toward pro residues. The segment covering 77–87 (PQSAAPSPADP) has biased composition (low complexity).

It belongs to the BORG/CEP family. Interacts with CDC42, in a GTP-dependent manner, and with SEPT7.

It localises to the endomembrane system. The protein resides in the cytoplasm. The protein localises to the cytoskeleton. Functionally, probably involved in the organization of the actin cytoskeleton. May act downstream of CDC42 to induce actin filament assembly leading to cell shape changes. Induces pseudopodia formation in fibroblasts. Inhibits MAPK8 independently of CDC42 binding. Controls septin organization and this effect is negatively regulated by CDC42. The protein is Cdc42 effector protein 5 (CDC42EP5) of Homo sapiens (Human).